The following is a 345-amino-acid chain: S-adenosylmethionine:tRNA ribosyltransferase-isomerase (345 aa).

The protein belongs to the QueA family. As to quaternary structure, monomer.

Its subcellular location is the cytoplasm. The enzyme catalyses 7-aminomethyl-7-carbaguanosine(34) in tRNA + S-adenosyl-L-methionine = epoxyqueuosine(34) in tRNA + adenine + L-methionine + 2 H(+). It participates in tRNA modification; tRNA-queuosine biosynthesis. Its function is as follows. Transfers and isomerizes the ribose moiety from AdoMet to the 7-aminomethyl group of 7-deazaguanine (preQ1-tRNA) to give epoxyqueuosine (oQ-tRNA). In Shewanella loihica (strain ATCC BAA-1088 / PV-4), this protein is S-adenosylmethionine:tRNA ribosyltransferase-isomerase.